The primary structure comprises 553 residues: Sensitive to high expression protein 9 homolog, mitochondrial (553 aa).

The disordered stretch occupies residues 61-174 (FFSTQPPKDT…TAQPELPSRT (114 aa)). Over residues 62 to 84 (FSTQPPKDTPENMNNKETGSSNV) the composition is skewed to polar residues. The segment covering 103-116 (AKEDTTDATNKSET) has biased composition (basic and acidic residues). Residues 133 to 160 (SDVSSASTSDSANSSETTTTTSETTPEN) are compositionally biased toward low complexity. Coiled-coil stretches lie at residues 210 to 241 (SAIEQIKRKNAELEVAHGQAQSRLRDARHNYK) and 277 to 309 (RLDHELEAQVAQAAQELTEAETEESRLSADLNA). Residues 331 to 351 (WGTWGLMGVNVLLFLVLQFVA) form a helical membrane-spanning segment. Over 352-523 (EPWRRKRLMK…RIDLKMRDVS (172 aa)) the chain is Mitochondrial intermembrane. Disordered regions lie at residues 408 to 428 (ALASTSSSSGDPQGGGGRTEG) and 443 to 497 (AEEA…QTLS). Composition is skewed to low complexity over residues 443-473 (AEEAAEEAATAQQQQQQQQQQQQQQHHQTPE) and 484-495 (TWKQTAQKWQQT). A helical membrane pass occupies residues 524-544 (LLALESAATGAAVVASVAFFV). Residues 545-553 (LRSSGSGKA) are Mitochondrial matrix-facing.

It belongs to the SHE9 family. In terms of assembly, homooligomer.

The protein localises to the mitochondrion inner membrane. In terms of biological role, required for the maintenance of the structure of the mitochondrial inner membrane. Involved in mitochondrial morphology. Causes growth arrest when highly overexpressed. The protein is Sensitive to high expression protein 9 homolog, mitochondrial (she-9) of Neurospora crassa (strain ATCC 24698 / 74-OR23-1A / CBS 708.71 / DSM 1257 / FGSC 987).